The following is a 178-amino-acid chain: uncharacterized protein (178 aa).

A compositionally biased stretch (basic and acidic residues) spans 1 to 16 (MNKRTSVDASKEDLHP). The disordered stretch occupies residues 1-43 (MNKRTSVDASKEDLHPADPQSGEGVPPNRKNTKTSPRGEGTAP).

This is an uncharacterized protein from Homo sapiens (Human).